The chain runs to 244 residues: tRNA (guanine-N(1)-)-methyltransferase (244 aa).

S-adenosyl-L-methionine is bound by residues glycine 113 and 133–138 (IGDYVL).

The protein belongs to the RNA methyltransferase TrmD family. Homodimer.

The protein resides in the cytoplasm. The enzyme catalyses guanosine(37) in tRNA + S-adenosyl-L-methionine = N(1)-methylguanosine(37) in tRNA + S-adenosyl-L-homocysteine + H(+). Its function is as follows. Specifically methylates guanosine-37 in various tRNAs. This is tRNA (guanine-N(1)-)-methyltransferase from Bacillus cereus (strain G9842).